A 612-amino-acid chain; its full sequence is Phosphoenolpyruvate carboxykinase [GTP] (612 aa).

Residues Arg-82 and 221–223 contribute to the substrate site; that span reads YGG. 2 residues coordinate Mn(2+): Lys-230 and His-250. Ser-272 provides a ligand contact to substrate. Position 273–278 (273–278) interacts with GTP; sequence ACGKTN. Residue Cys-274 is part of the active site. Asp-297 is a Mn(2+) binding site. Substrate is bound at residue 388-390; that stretch reads NSR. Residues Arg-390, Arg-421, and 516–519 contribute to the GTP site; that span reads FGEN.

It belongs to the phosphoenolpyruvate carboxykinase [GTP] family. Monomer. Mn(2+) is required as a cofactor.

Its subcellular location is the cytoplasm. It carries out the reaction oxaloacetate + GTP = phosphoenolpyruvate + GDP + CO2. The protein operates within carbohydrate biosynthesis; gluconeogenesis. Catalyzes the conversion of oxaloacetate (OAA) to phosphoenolpyruvate (PEP), the rate-limiting step in the metabolic pathway that produces glucose from lactate and other precursors derived from the citric acid cycle. The polypeptide is Phosphoenolpyruvate carboxykinase [GTP] (Corynebacterium efficiens (strain DSM 44549 / YS-314 / AJ 12310 / JCM 11189 / NBRC 100395)).